Here is a 203-residue protein sequence, read N- to C-terminus: Small ribosomal subunit protein uS4 (203 aa).

Positions T93–I156 constitute an S4 RNA-binding domain.

The protein belongs to the universal ribosomal protein uS4 family. As to quaternary structure, part of the 30S ribosomal subunit. Contacts protein S5. The interaction surface between S4 and S5 is involved in control of translational fidelity.

Its function is as follows. One of the primary rRNA binding proteins, it binds directly to 16S rRNA where it nucleates assembly of the body of the 30S subunit. In terms of biological role, with S5 and S12 plays an important role in translational accuracy. The sequence is that of Small ribosomal subunit protein uS4 from Lacticaseibacillus casei (strain BL23) (Lactobacillus casei).